Here is a 390-residue protein sequence, read N- to C-terminus: Chorismate synthase 2 (390 aa).

The NADP(+) site is built by arginine 39 and arginine 45. Residues 132 to 134 (RSS), 253 to 254 (NA), glycine 298, 313 to 317 (KPIPT), and arginine 339 contribute to the FMN site.

This sequence belongs to the chorismate synthase family. In terms of assembly, homotetramer. FMNH2 serves as cofactor.

The catalysed reaction is 5-O-(1-carboxyvinyl)-3-phosphoshikimate = chorismate + phosphate. It participates in metabolic intermediate biosynthesis; chorismate biosynthesis; chorismate from D-erythrose 4-phosphate and phosphoenolpyruvate: step 7/7. Catalyzes the anti-1,4-elimination of the C-3 phosphate and the C-6 proR hydrogen from 5-enolpyruvylshikimate-3-phosphate (EPSP) to yield chorismate, which is the branch point compound that serves as the starting substrate for the three terminal pathways of aromatic amino acid biosynthesis. This reaction introduces a second double bond into the aromatic ring system. The chain is Chorismate synthase 2 from Bacillus cereus (strain ATCC 10987 / NRS 248).